The primary structure comprises 184 residues: ATP synthase subunit b 1 (184 aa).

The chain crosses the membrane as a helical span at residues 4-24 (LSILAALAASPAMAATGPFFS).

Belongs to the ATPase B chain family. F-type ATPases have 2 components, F(1) - the catalytic core - and F(0) - the membrane proton channel. F(1) has five subunits: alpha(3), beta(3), gamma(1), delta(1), epsilon(1). F(0) has three main subunits: a(1), b(2) and c(10-14). The alpha and beta chains form an alternating ring which encloses part of the gamma chain. F(1) is attached to F(0) by a central stalk formed by the gamma and epsilon chains, while a peripheral stalk is formed by the delta and b chains.

It is found in the cell inner membrane. F(1)F(0) ATP synthase produces ATP from ADP in the presence of a proton or sodium gradient. F-type ATPases consist of two structural domains, F(1) containing the extramembraneous catalytic core and F(0) containing the membrane proton channel, linked together by a central stalk and a peripheral stalk. During catalysis, ATP synthesis in the catalytic domain of F(1) is coupled via a rotary mechanism of the central stalk subunits to proton translocation. Functionally, component of the F(0) channel, it forms part of the peripheral stalk, linking F(1) to F(0). The sequence is that of ATP synthase subunit b 1 from Cereibacter sphaeroides (strain ATCC 17025 / ATH 2.4.3) (Rhodobacter sphaeroides).